Reading from the N-terminus, the 202-residue chain is Peptide deformylase 2 (202 aa).

Residues C120 and H162 each coordinate Fe cation. E163 is a catalytic residue. H166 contacts Fe cation.

This sequence belongs to the polypeptide deformylase family. Fe(2+) serves as cofactor.

The enzyme catalyses N-terminal N-formyl-L-methionyl-[peptide] + H2O = N-terminal L-methionyl-[peptide] + formate. In terms of biological role, removes the formyl group from the N-terminal Met of newly synthesized proteins. Requires at least a dipeptide for an efficient rate of reaction. N-terminal L-methionine is a prerequisite for activity but the enzyme has broad specificity at other positions. The protein is Peptide deformylase 2 of Rickettsia conorii (strain ATCC VR-613 / Malish 7).